The sequence spans 384 residues: S-adenosylmethionine synthase (384 aa).

Residue H15 coordinates ATP. D17 is a Mg(2+) binding site. E43 serves as a coordination point for K(+). Residues E56 and Q99 each coordinate L-methionine. Positions 99-109 are flexible loop; that stretch reads QSPDINQGVDR. ATP is bound by residues 164–166, 230–231, D239, 245–246, A262, and K266; these read DAK, RF, and RK. Residue D239 coordinates L-methionine. Residue K270 participates in L-methionine binding.

The protein belongs to the AdoMet synthase family. In terms of assembly, homotetramer; dimer of dimers. Mg(2+) serves as cofactor. Requires K(+) as cofactor.

It is found in the cytoplasm. It carries out the reaction L-methionine + ATP + H2O = S-adenosyl-L-methionine + phosphate + diphosphate. The protein operates within amino-acid biosynthesis; S-adenosyl-L-methionine biosynthesis; S-adenosyl-L-methionine from L-methionine: step 1/1. In terms of biological role, catalyzes the formation of S-adenosylmethionine (AdoMet) from methionine and ATP. The overall synthetic reaction is composed of two sequential steps, AdoMet formation and the subsequent tripolyphosphate hydrolysis which occurs prior to release of AdoMet from the enzyme. The protein is S-adenosylmethionine synthase of Salmonella gallinarum (strain 287/91 / NCTC 13346).